Reading from the N-terminus, the 357-residue chain is Probable dual-specificity RNA methyltransferase RlmN (357 aa).

Glu92 acts as the Proton acceptor in catalysis. Positions 98–336 (HKYGLSVCVT…CGVRLEHGTD (239 aa)) constitute a Radical SAM core domain. An intrachain disulfide couples Cys105 to Cys341. Positions 112, 116, and 119 each coordinate [4Fe-4S] cluster. S-adenosyl-L-methionine is bound by residues 164 to 165 (GE), Ser196, 219 to 221 (SLH), and Asn297. Catalysis depends on Cys341, which acts as the S-methylcysteine intermediate.

The protein belongs to the radical SAM superfamily. RlmN family. The cofactor is [4Fe-4S] cluster.

Its subcellular location is the cytoplasm. The enzyme catalyses adenosine(2503) in 23S rRNA + 2 reduced [2Fe-2S]-[ferredoxin] + 2 S-adenosyl-L-methionine = 2-methyladenosine(2503) in 23S rRNA + 5'-deoxyadenosine + L-methionine + 2 oxidized [2Fe-2S]-[ferredoxin] + S-adenosyl-L-homocysteine. It catalyses the reaction adenosine(37) in tRNA + 2 reduced [2Fe-2S]-[ferredoxin] + 2 S-adenosyl-L-methionine = 2-methyladenosine(37) in tRNA + 5'-deoxyadenosine + L-methionine + 2 oxidized [2Fe-2S]-[ferredoxin] + S-adenosyl-L-homocysteine. Functionally, specifically methylates position 2 of adenine 2503 in 23S rRNA and position 2 of adenine 37 in tRNAs. The protein is Probable dual-specificity RNA methyltransferase RlmN of Exiguobacterium sibiricum (strain DSM 17290 / CCUG 55495 / CIP 109462 / JCM 13490 / 255-15).